Reading from the N-terminus, the 122-residue chain is Large ribosomal subunit protein uL14 (122 aa).

The protein belongs to the universal ribosomal protein uL14 family. Part of the 50S ribosomal subunit. Forms a cluster with proteins L3 and L19. In the 70S ribosome, L14 and L19 interact and together make contacts with the 16S rRNA in bridges B5 and B8.

Its function is as follows. Binds to 23S rRNA. Forms part of two intersubunit bridges in the 70S ribosome. The chain is Large ribosomal subunit protein uL14 from Lawsonia intracellularis (strain PHE/MN1-00).